The sequence spans 118 residues: Large ribosomal subunit protein bL20 (118 aa).

This sequence belongs to the bacterial ribosomal protein bL20 family.

Binds directly to 23S ribosomal RNA and is necessary for the in vitro assembly process of the 50S ribosomal subunit. It is not involved in the protein synthesizing functions of that subunit. The chain is Large ribosomal subunit protein bL20 from Cyanothece sp. (strain PCC 7425 / ATCC 29141).